Here is a 392-residue protein sequence, read N- to C-terminus: O-phospho-L-seryl-tRNA:Cys-tRNA synthase (392 aa).

Pyridoxal 5'-phosphate is bound by residues 84–85, Asn-191, and 214–216; these read AR and SGH. Position 217 is an N6-(pyridoxal phosphate)lysine (Lys-217).

Belongs to the SepCysS family. Homodimer. Interacts with SepRS. Pyridoxal 5'-phosphate serves as cofactor.

The enzyme catalyses O-phospho-L-seryl-tRNA(Cys) + hydrogen sulfide + H(+) = L-cysteinyl-tRNA(Cys) + phosphate. Converts O-phospho-L-seryl-tRNA(Cys) (Sep-tRNA(Cys)) to L-cysteinyl-tRNA(Cys) (Cys-tRNA(Cys)). The chain is O-phospho-L-seryl-tRNA:Cys-tRNA synthase from Methanopyrus kandleri (strain AV19 / DSM 6324 / JCM 9639 / NBRC 100938).